The primary structure comprises 327 residues: Undecaprenyl-phosphate 4-deoxy-4-formamido-L-arabinose transferase (327 aa).

A run of 2 helical transmembrane segments spans residues 236 to 256 (LSIF…LLVV) and 270 to 290 (VFML…GMGL).

It belongs to the glycosyltransferase 2 family.

The protein localises to the cell inner membrane. The catalysed reaction is UDP-4-deoxy-4-formamido-beta-L-arabinose + di-trans,octa-cis-undecaprenyl phosphate = 4-deoxy-4-formamido-alpha-L-arabinopyranosyl di-trans,octa-cis-undecaprenyl phosphate + UDP. It participates in glycolipid biosynthesis; 4-amino-4-deoxy-alpha-L-arabinose undecaprenyl phosphate biosynthesis; 4-amino-4-deoxy-alpha-L-arabinose undecaprenyl phosphate from UDP-4-deoxy-4-formamido-beta-L-arabinose and undecaprenyl phosphate: step 1/2. It functions in the pathway bacterial outer membrane biogenesis; lipopolysaccharide biosynthesis. Its function is as follows. Catalyzes the transfer of 4-deoxy-4-formamido-L-arabinose from UDP to undecaprenyl phosphate. The modified arabinose is attached to lipid A and is required for resistance to polymyxin and cationic antimicrobial peptides. The protein is Undecaprenyl-phosphate 4-deoxy-4-formamido-L-arabinose transferase of Klebsiella pneumoniae (strain 342).